The chain runs to 572 residues: MSYNFILFVVFIFTLVIITKPLGTYIFKVFNNERTWLDWFAKPFQRVYLLILGESSKKEQSAKSYFFSLLSFSIMAFIFVFVVLLLQGLLPFNPQEIKGMGFSQAFNTAVSFVTNTNWQSYSGETGVSHFSQMLALAVQNFVSAAVGLCVAIVLIRSVARHEATKVGNFWNDLGKAIFWILLPISIIIAIVYIFQGVPQNIMAYLHVHTLAGSDQIIAQGPIASQEAIKSLGTNGGGFFNANSAHPYENPTIITNYIQMVSIFAIAAALTYTFGKWVGNTKQGWMIFAVMLVLFVISLMVMTISELHGLDFLHSKNIQDIYGQVGHLSNMEGKETRFGIFNSTLYNTVSTSASDGGVNSVMDSYSAIGGMMAMLNMAIGEVIFGGIGAGFYGFFMFLMLAVFIGSLMIGRAPSFLGKRIEANDMKWTMFALLISPCCVLVFTGLAAVIPSVHQALTNSGAHGFSEILYAYISGSNNNGSAFAGLAANTSYLNITIALSMLIGRFGVIFAVMMLAGSLVKKKRSSQMSEISSLDTTSFIFSVLVFFTIVLIGGLTIFPALSLGPILDQLNLNF.

10 helical membrane-spanning segments follow: residues 6–26 (ILFVVFIFTLVIITKPLGTYI), 66–86 (FFSLLSFSIMAFIFVFVVLLL), 135–155 (ALAVQNFVSAAVGLCVAIVLI), 177–197 (IFWILLPISIIIAIVYIFQGV), 251–271 (TIITNYIQMVSIFAIAAALTY), 283–303 (GWMIFAVMLVLFVISLMVMTI), 382–402 (IFGGIGAGFYGFFMFLMLAVF), 428–448 (MFALLISPCCVLVFTGLAAVI), 493–513 (ITIALSMLIGRFGVIFAVMML), and 537–557 (FIFSVLVFFTIVLIGGLTIFP).

It belongs to the KdpA family. In terms of assembly, the system is composed of three essential subunits: KdpA, KdpB and KdpC.

It is found in the cell inner membrane. Its function is as follows. Part of the high-affinity ATP-driven potassium transport (or Kdp) system, which catalyzes the hydrolysis of ATP coupled with the electrogenic transport of potassium into the cytoplasm. This subunit binds the periplasmic potassium ions and delivers the ions to the membrane domain of KdpB through an intramembrane tunnel. The chain is Potassium-transporting ATPase potassium-binding subunit from Francisella philomiragia subsp. philomiragia (strain ATCC 25017 / CCUG 19701 / FSC 153 / O#319-036).